Here is a 248-residue protein sequence, read N- to C-terminus: Probable transcriptional regulatory protein RPC_4807 (248 aa).

Positions 1–21 (MAGHSQFKNIMHRKGRQDAQK) are disordered.

This sequence belongs to the TACO1 family.

The protein resides in the cytoplasm. In Rhodopseudomonas palustris (strain BisB18), this protein is Probable transcriptional regulatory protein RPC_4807.